Reading from the N-terminus, the 120-residue chain is Cell division protein FtsL (120 aa).

Residues 1–22 (MSNVAYKSNLEPNRVHREAEQP) are disordered. The Cytoplasmic segment spans residues 1 to 37 (MSNVAYKSNLEPNRVHREAEQPKKQILKRGQMTLGEK). Positions 13-22 (NRVHREAEQP) are enriched in basic and acidic residues. A helical transmembrane segment spans residues 38 to 58 (VIITIALAIVLVVAFRIISVQ). The Extracellular segment spans residues 59–120 (AQIYTVNQEI…GDNVKVVDGQ (62 aa)).

The protein belongs to the FtsL family.

The protein localises to the cell membrane. In terms of biological role, essential cell division protein. This Listeria monocytogenes serovar 1/2a (strain ATCC BAA-679 / EGD-e) protein is Cell division protein FtsL.